A 144-amino-acid chain; its full sequence is Large ribosomal subunit protein uL11 (144 aa).

This sequence belongs to the universal ribosomal protein uL11 family. In terms of assembly, part of the ribosomal stalk of the 50S ribosomal subunit. Interacts with L10 and the large rRNA to form the base of the stalk. L10 forms an elongated spine to which L12 dimers bind in a sequential fashion forming a multimeric L10(L12)X complex. One or more lysine residues are methylated.

Functionally, forms part of the ribosomal stalk which helps the ribosome interact with GTP-bound translation factors. The protein is Large ribosomal subunit protein uL11 of Streptomyces coelicolor (strain ATCC BAA-471 / A3(2) / M145).